Consider the following 500-residue polypeptide: Trehalose-6-phosphate synthase (500 aa).

D-glucose 6-phosphate is bound at residue Arg-28. 48-49 provides a ligand contact to UDP-alpha-D-glucose; it reads GG. 2 residues coordinate D-glucose 6-phosphate: Tyr-108 and Asp-162. Residues Arg-304 and Lys-309 each coordinate UDP-alpha-D-glucose. Residue Arg-342 coordinates D-glucose 6-phosphate. 407–411 lines the UDP-alpha-D-glucose pocket; it reads LVAKE.

It belongs to the glycosyltransferase 20 family. As to quaternary structure, homotetramer.

It catalyses the reaction ADP-alpha-D-glucose + D-glucose 6-phosphate = alpha,alpha-trehalose 6-phosphate + ADP + H(+). It carries out the reaction CDP-alpha-D-glucose + D-glucose 6-phosphate = alpha,alpha-trehalose 6-phosphate + CDP + H(+). The catalysed reaction is GDP-alpha-D-glucose + D-glucose 6-phosphate = alpha,alpha-trehalose 6-phosphate + GDP + H(+). The enzyme catalyses TDP-alpha-D-glucose + D-glucose 6-phosphate = 5-methyl-UDP + alpha,alpha-trehalose 6-phosphate + H(+). It catalyses the reaction D-glucose 6-phosphate + UDP-alpha-D-glucose = alpha,alpha-trehalose 6-phosphate + UDP + H(+). The protein operates within glycan biosynthesis; trehalose biosynthesis. In terms of biological role, probably involved in the osmoprotection via the biosynthesis of trehalose and in the production of glycogen and alpha-glucan via the TreS-Pep2 branch involved in the biosynthesis of maltose-1-phosphate (M1P). Catalyzes the transfer of glucose from UDP-glucose (UDP-Glc) to D-glucose 6-phosphate (Glc-6-P) to form trehalose-6-phosphate. Probably also able to use ADP-Glc, CDP-Glc, GDP-Glc and TDP-Glc as glucosyl donors. The polypeptide is Trehalose-6-phosphate synthase (Mycobacterium tuberculosis (strain CDC 1551 / Oshkosh)).